The chain runs to 94 residues: Small ribosomal subunit protein uS19 (94 aa).

It belongs to the universal ribosomal protein uS19 family.

Its function is as follows. Protein S19 forms a complex with S13 that binds strongly to the 16S ribosomal RNA. This is Small ribosomal subunit protein uS19 from Finegoldia magna (strain ATCC 29328 / DSM 20472 / WAL 2508) (Peptostreptococcus magnus).